Reading from the N-terminus, the 96-residue chain is Pore-forming peptide amoebapore B (96 aa).

A signal peptide spans methionine 1–glutamate 19. The Saposin B-type domain occupies glycine 20–cysteine 96. 3 cysteine pairs are disulfide-bonded: cysteine 24–cysteine 96, cysteine 27–cysteine 90, and cysteine 54–cysteine 65.

In terms of assembly, monomer. Homodimer. Hexamer; formed during insertion in the membrane.

The protein resides in the cytoplasmic granule. Its function is as follows. Forms pores in the cell membrane of host cells. Has antibacterial activity against M.luteus, no activity against E.coli. Implicated in the cytolytic activity of the parasite. In Entamoeba histolytica (strain ATCC 30459 / HM-1:IMSS / ABRM), this protein is Pore-forming peptide amoebapore B.